The chain runs to 484 residues: Fork head protein homolog 1 (484 aa).

The region spanning 76 to 142 (VTIGRNTDSL…NGAKVNFRRI (67 aa)) is the FHA domain. Positions 302 to 393 (IKPPQSYASM…RRDFLNKWNA (92 aa)) form a DNA-binding region, fork-head.

In terms of assembly, interacts (via FHA domain) with ECM30, GLN3, URE2, MPH1 AND FDO1. Interacts with the origin recognition complex (ORC) composed of ORC1 to ORC6.

It is found in the nucleus. The protein resides in the cytoplasm. It localises to the cytosol. Its function is as follows. Transcription factor that regulates the expression of the CLB2 cluster of genes during the G2/M phase of the mitotic cell cycle. The CLB2 cluster of genes includes mitotic regulators such as CLB1, CLB2, CDC5 and CDC20 as well as SWI5 and ACE2, transcription factors required for the subsequent temporal wave of cell cycle regulated gene expression in the M/G1 phase interval. Involved in HMRa silencing. FKH1 and FKH2 associate with the coding regions of active genes and influence, in opposing ways, transcriptional elongation and termination, and coordinate early transcription elongation and pre-mRNA processing. Both FKH1 and FKH2 play a role as regulators of lifespan in collaboration with the anaphase-promoting complex (APC), likely through combined regulation of stress response, genomic stability, and cell cycle regulation. FKH1 and FKH2 function also in controlling yeast cell morphology by preventing preudohyphal growth. Acts as a rate-limiting replication origin activator via its interaction with the origin recognition complex (ORC). Plays a transcription-independent role in recombination donor preference during mating-type switching through binding to the recombination enhancer (RE), a 700-bp cis-acting element that controls recombination along the left arm of chromosome III. This Saccharomyces cerevisiae (strain ATCC 204508 / S288c) (Baker's yeast) protein is Fork head protein homolog 1.